The sequence spans 513 residues: Protein phosphatase 1H (513 aa).

At Ser7 the chain carries Phosphoserine. Residues 77-506 form the PPM-type phosphatase domain; it reads ATGYAEVINA…DDISVYVIPL (430 aa). Positions 110 to 133 are disordered; that stretch reads ITSTPNRNSKRRSSLPNGEGLQLK. Phosphothreonine is present on Thr113. Phosphoserine occurs at positions 123 and 210. Arg212 carries the omega-N-methylarginine modification. At Ser220 the chain carries Phosphoserine. The residue at position 223 (Thr223) is a Phosphothreonine. Ser421 bears the Phosphoserine mark.

The protein belongs to the PP2C family.

It localises to the nucleus. It is found in the cytoplasm. It carries out the reaction O-phospho-L-seryl-[protein] + H2O = L-seryl-[protein] + phosphate. The enzyme catalyses O-phospho-L-threonyl-[protein] + H2O = L-threonyl-[protein] + phosphate. Its function is as follows. Dephosphorylates CDKN1B at 'Thr-187', thus removing a signal for proteasomal degradation. The chain is Protein phosphatase 1H (Ppm1h) from Rattus norvegicus (Rat).